The following is a 215-amino-acid chain: Phosphoenolpyruvate guanylyltransferase (215 aa).

Positions 144, 159, and 162 each coordinate phosphoenolpyruvate.

This sequence belongs to the CofC family.

It catalyses the reaction phosphoenolpyruvate + GTP + H(+) = enolpyruvoyl-2-diphospho-5'-guanosine + diphosphate. The protein operates within cofactor biosynthesis; coenzyme F420 biosynthesis. Its function is as follows. Guanylyltransferase that catalyzes the activation of phosphoenolpyruvate (PEP) as enolpyruvoyl-2-diphospho-5'-guanosine, via the condensation of PEP with GTP. It is involved in the biosynthesis of coenzyme F420, a hydride carrier cofactor. The polypeptide is Phosphoenolpyruvate guanylyltransferase (Geodermatophilus obscurus (strain ATCC 25078 / DSM 43160 / JCM 3152 / CCUG 61914 / KCC A-0152 / KCTC 9177 / NBRC 13315 / NRRL B-3577 / G-20)).